The following is a 479-amino-acid chain: Dihydrolipoyl dehydrogenase (479 aa).

FAD-binding positions include 41–50 (EKRGALGGTC), Lys59, Ala124, and 153–155 (TGS). An intrachain disulfide couples Cys50 to Cys55. NAD(+)-binding positions include 190–197 (GGGVIGLE), Glu213, Ile247, and Gly284. FAD contacts are provided by residues Asp325 and 332–335 (MLAH). His458 serves as the catalytic Proton acceptor.

This sequence belongs to the class-I pyridine nucleotide-disulfide oxidoreductase family. Homodimer. FAD is required as a cofactor.

The enzyme catalyses N(6)-[(R)-dihydrolipoyl]-L-lysyl-[protein] + NAD(+) = N(6)-[(R)-lipoyl]-L-lysyl-[protein] + NADH + H(+). The polypeptide is Dihydrolipoyl dehydrogenase (Trypanosoma brucei brucei).